Here is a 178-residue protein sequence, read N- to C-terminus: ATP synthase subunit d, mitochondrial (178 aa).

The tract at residues 149 to 178 (NKPTFWPHTPEEQVGYKSKEQLEAEAQGHH) is disordered. Residues 165–178 (KSKEQLEAEAQGHH) are compositionally biased toward basic and acidic residues.

This sequence belongs to the ATPase d subunit family. F-type ATPases have 2 components, CF(1) - the catalytic core - and CF(0) - the membrane proton channel. CF(0) seems to have nine subunits: a, b, c, d, e, f, g, F6 and 8 (or A6L).

The protein resides in the mitochondrion. The protein localises to the mitochondrion inner membrane. Its function is as follows. Mitochondrial membrane ATP synthase (F(1)F(0) ATP synthase or Complex V) produces ATP from ADP in the presence of a proton gradient across the membrane which is generated by electron transport complexes of the respiratory chain. F-type ATPases consist of two structural domains, F(1) - containing the extramembraneous catalytic core, and F(0) - containing the membrane proton channel, linked together by a central stalk and a peripheral stalk. During catalysis, ATP synthesis in the catalytic domain of F(1) is coupled via a rotary mechanism of the central stalk subunits to proton translocation. Part of the complex F(0) domain and the peripheric stalk, which acts as a stator to hold the catalytic alpha(3)beta(3) subcomplex and subunit a/ATP6 static relative to the rotary elements. In Drosophila melanogaster (Fruit fly), this protein is ATP synthase subunit d, mitochondrial.